The sequence spans 197 residues: Large ribosomal subunit protein bL17 (197 aa).

A disordered region spans residues 136 to 197 (RAAKKADAPQ…DAEKSSDTEK (62 aa)). Residues 148 to 187 (VADEATDADESVEDEAPAQDDSADEVEAAADETPADDAEA) are compositionally biased toward acidic residues. Positions 188 to 197 (DAEKSSDTEK) are enriched in basic and acidic residues.

It belongs to the bacterial ribosomal protein bL17 family. In terms of assembly, part of the 50S ribosomal subunit. Contacts protein L32.

This is Large ribosomal subunit protein bL17 from Beutenbergia cavernae (strain ATCC BAA-8 / DSM 12333 / CCUG 43141 / JCM 11478 / NBRC 16432 / NCIMB 13614 / HKI 0122).